The following is a 465-amino-acid chain: UDP-N-acetylmuramate--L-alanine ligase (465 aa).

118–124 (GTHGKTT) contributes to the ATP binding site.

This sequence belongs to the MurCDEF family.

Its subcellular location is the cytoplasm. The catalysed reaction is UDP-N-acetyl-alpha-D-muramate + L-alanine + ATP = UDP-N-acetyl-alpha-D-muramoyl-L-alanine + ADP + phosphate + H(+). Its pathway is cell wall biogenesis; peptidoglycan biosynthesis. Its function is as follows. Cell wall formation. The sequence is that of UDP-N-acetylmuramate--L-alanine ligase from Ruegeria pomeroyi (strain ATCC 700808 / DSM 15171 / DSS-3) (Silicibacter pomeroyi).